The primary structure comprises 1212 residues: DNA-directed RNA polymerase subunit beta' (1212 aa).

Zn(2+)-binding residues include cysteine 60, cysteine 62, cysteine 75, and cysteine 78. Positions 450, 452, and 454 each coordinate Mg(2+). 4 residues coordinate Zn(2+): cysteine 819, cysteine 893, cysteine 900, and cysteine 903.

Belongs to the RNA polymerase beta' chain family. As to quaternary structure, the RNAP catalytic core consists of 2 alpha, 1 beta, 1 beta' and 1 omega subunit. When a sigma factor is associated with the core the holoenzyme is formed, which can initiate transcription. Mg(2+) is required as a cofactor. It depends on Zn(2+) as a cofactor.

The catalysed reaction is RNA(n) + a ribonucleoside 5'-triphosphate = RNA(n+1) + diphosphate. DNA-dependent RNA polymerase catalyzes the transcription of DNA into RNA using the four ribonucleoside triphosphates as substrates. The chain is DNA-directed RNA polymerase subunit beta' from Streptococcus thermophilus (strain CNRZ 1066).